A 207-amino-acid polypeptide reads, in one-letter code: Thiamine-phosphate synthase (207 aa).

4-amino-2-methyl-5-(diphosphooxymethyl)pyrimidine contacts are provided by residues 37–41 (QYRHK) and N69. Mg(2+) contacts are provided by D70 and D89. S108 and K138 together coordinate 4-amino-2-methyl-5-(diphosphooxymethyl)pyrimidine. Residues G165 and 185–186 (IS) contribute to the 2-[(2R,5Z)-2-carboxy-4-methylthiazol-5(2H)-ylidene]ethyl phosphate site.

It belongs to the thiamine-phosphate synthase family. It depends on Mg(2+) as a cofactor.

The catalysed reaction is 2-[(2R,5Z)-2-carboxy-4-methylthiazol-5(2H)-ylidene]ethyl phosphate + 4-amino-2-methyl-5-(diphosphooxymethyl)pyrimidine + 2 H(+) = thiamine phosphate + CO2 + diphosphate. The enzyme catalyses 2-(2-carboxy-4-methylthiazol-5-yl)ethyl phosphate + 4-amino-2-methyl-5-(diphosphooxymethyl)pyrimidine + 2 H(+) = thiamine phosphate + CO2 + diphosphate. It carries out the reaction 4-methyl-5-(2-phosphooxyethyl)-thiazole + 4-amino-2-methyl-5-(diphosphooxymethyl)pyrimidine + H(+) = thiamine phosphate + diphosphate. Its pathway is cofactor biosynthesis; thiamine diphosphate biosynthesis; thiamine phosphate from 4-amino-2-methyl-5-diphosphomethylpyrimidine and 4-methyl-5-(2-phosphoethyl)-thiazole: step 1/1. In terms of biological role, condenses 4-methyl-5-(beta-hydroxyethyl)thiazole monophosphate (THZ-P) and 2-methyl-4-amino-5-hydroxymethyl pyrimidine pyrophosphate (HMP-PP) to form thiamine monophosphate (TMP). This is Thiamine-phosphate synthase from Janthinobacterium sp. (strain Marseille) (Minibacterium massiliensis).